The sequence spans 222 residues: Capsular polysaccharide type 5 biosynthesis protein cap5A (222 aa).

2 helical membrane passes run 20-40 (ILIILPLLFLIISAIVTFFVL) and 172-192 (VVNLIGAFFLGLVVALIYIFF).

This sequence belongs to the CpsC/CapA family.

The protein localises to the cell membrane. Required for the biosynthesis of type 5 capsular polysaccharide (Cap5/CP5). Might act as the chain-length regulator. The polypeptide is Capsular polysaccharide type 5 biosynthesis protein cap5A (cap5A) (Staphylococcus aureus (strain Newman)).